Consider the following 197-residue polypeptide: Pyridoxal 5'-phosphate synthase subunit PdxT (197 aa).

Position 52-54 (52-54) interacts with L-glutamine; that stretch reads GES. The active-site Nucleophile is Cys84. L-glutamine is bound by residues Arg111 and 139–140; that span reads IR. Residues His175 and Glu177 each act as charge relay system in the active site.

The protein belongs to the glutaminase PdxT/SNO family. In the presence of PdxS, forms a dodecamer of heterodimers. Only shows activity in the heterodimer.

It catalyses the reaction aldehydo-D-ribose 5-phosphate + D-glyceraldehyde 3-phosphate + L-glutamine = pyridoxal 5'-phosphate + L-glutamate + phosphate + 3 H2O + H(+). The enzyme catalyses L-glutamine + H2O = L-glutamate + NH4(+). It participates in cofactor biosynthesis; pyridoxal 5'-phosphate biosynthesis. In terms of biological role, catalyzes the hydrolysis of glutamine to glutamate and ammonia as part of the biosynthesis of pyridoxal 5'-phosphate. The resulting ammonia molecule is channeled to the active site of PdxS. This chain is Pyridoxal 5'-phosphate synthase subunit PdxT, found in Halorubrum lacusprofundi (strain ATCC 49239 / DSM 5036 / JCM 8891 / ACAM 34).